A 464-amino-acid polypeptide reads, in one-letter code: FERM domain-containing protein 8 (464 aa).

M1 carries the N-acetylmethionine modification. The disordered stretch occupies residues 1 to 22 (MDGTEGSAGQPGPAERSHRSSV). Residue S24 is modified to Phosphoserine. Positions 30–376 (ADVLVYLADD…YCIELSQAAE (347 aa)) constitute an FERM domain. Residues 376–408 (EPAGPQDSATGSPSDPSSSLAPVQRPKLRRQGS) are disordered. Phosphoserine is present on residues S383, S387, and S408. T419 is modified (phosphothreonine). 2 positions are modified to phosphoserine: S439 and S446.

As to quaternary structure, interacts with iRhom1/RHBDF1 and iRhom2/RHBDF2 (via cytoplasmic N-termini); this interaction leads to mutual protein stabilization. Interacts with ADAM17; this interaction is indirect and mediated by iRhom proteins. Interacts with LRP6; this interaction affects LRP6-binding to AXIN1. Widely expressed, with high expression in heart and spleen.

The protein resides in the cytoplasm. The protein localises to the cytosol. It is found in the cell membrane. Its function is as follows. Promotes the cell surface stability of iRhom1/RHBDF1 and iRhom2/RHBDF2 and prevents their degradation via the endolysosomal pathway. By acting on iRhoms, involved in ADAM17-mediated shedding of TNF, amphiregulin/AREG, HBEGF and TGFA from the cell surface. Negatively regulates Wnt signaling, possibly by antagonizing the recruitment of AXIN1 to LRP6. The protein is FERM domain-containing protein 8 (FRMD8) of Homo sapiens (Human).